Consider the following 168-residue polypeptide: Ribosome maturation factor RimM (168 aa).

The 75-residue stretch at 93-167 (ENEFYQSDLV…YITLNMPEFI (75 aa)) folds into the PRC barrel domain.

Belongs to the RimM family. As to quaternary structure, binds ribosomal protein uS19.

It localises to the cytoplasm. Its function is as follows. An accessory protein needed during the final step in the assembly of 30S ribosomal subunit, possibly for assembly of the head region. Essential for efficient processing of 16S rRNA. May be needed both before and after RbfA during the maturation of 16S rRNA. It has affinity for free ribosomal 30S subunits but not for 70S ribosomes. The sequence is that of Ribosome maturation factor RimM from Wolbachia sp. subsp. Brugia malayi (strain TRS).